A 355-amino-acid polypeptide reads, in one-letter code: Ubiquinone biosynthesis protein COQ4 homolog, mitochondrial (355 aa).

Positions 134, 135, 138, and 150 each coordinate Zn(2+).

This sequence belongs to the COQ4 family. In terms of assembly, component of a multi-subunit COQ enzyme complex. Requires Zn(2+) as cofactor.

Its subcellular location is the mitochondrion inner membrane. The enzyme catalyses a 4-hydroxy-3-methoxy-5-(all-trans-polyprenyl)benzoate + H(+) = a 2-methoxy-6-(all-trans-polyprenyl)phenol + CO2. It participates in cofactor biosynthesis; ubiquinone biosynthesis. In terms of biological role, lyase that catalyzes the C1-decarboxylation of 4-hydroxy-3-methoxy-5-(all-trans-polyprenyl)benzoic acid into 2-methoxy-6-(all-trans-polyprenyl)phenol during ubiquinone biosynthesis. In Plasmodium vivax (strain Salvador I), this protein is Ubiquinone biosynthesis protein COQ4 homolog, mitochondrial.